A 338-amino-acid polypeptide reads, in one-letter code: Fructose-1,6-bisphosphatase 1 (338 aa).

Thr2 carries the N-acetylthreonine modification. Residues 18-22 (VMEEG) and 28-32 (TGEMT) contribute to the AMP site. Residues Asp69 and Glu98 each coordinate Mg(2+). 113–114 (KY) provides a ligand contact to AMP. Residues Asp119, Leu121, and Asp122 each contribute to the Mg(2+) site. Residue 122–125 (DGSS) participates in substrate binding. Arg141 contributes to the AMP binding site. Lys151 is subject to N6-succinyllysine. Ser208 bears the Phosphoserine; by PKA mark. Substrate contacts are provided by residues 213–216 (NEGY), 244–249 (RYVGSM), Tyr265, and 275–277 (KLR). 3 positions are modified to phosphotyrosine: Tyr216, Tyr245, and Tyr265. Glu281 is a Mg(2+) binding site.

Belongs to the FBPase class 1 family. Homotetramer. The cofactor is Mg(2+).

The catalysed reaction is beta-D-fructose 1,6-bisphosphate + H2O = beta-D-fructose 6-phosphate + phosphate. It functions in the pathway carbohydrate biosynthesis; gluconeogenesis. Its activity is regulated as follows. Subject to complex allosteric regulation. The enzyme can assume an active R-state, or an inactive T-state. Intermediate conformations may exist. AMP acts as an allosteric inhibitor. AMP binding affects the turnover of bound substrate and not the affinity for substrate. Fructose 2,6-bisphosphate acts as a competitive inhibitor. Fructose 2,6-bisphosphate and AMP have synergistic effects. In terms of biological role, catalyzes the hydrolysis of fructose 1,6-bisphosphate to fructose 6-phosphate in the presence of divalent cations, acting as a rate-limiting enzyme in gluconeogenesis. Plays a role in regulating glucose sensing and insulin secretion of pancreatic beta-cells. Appears to modulate glycerol gluconeogenesis in liver. Important regulator of appetite and adiposity; increased expression of the protein in liver after nutrient excess increases circulating satiety hormones and reduces appetite-stimulating neuropeptides and thus seems to provide a feedback mechanism to limit weight gain. This Sus scrofa (Pig) protein is Fructose-1,6-bisphosphatase 1 (FBP1).